Consider the following 294-residue polypeptide: 4-hydroxybenzoate octaprenyltransferase (294 aa).

7 consecutive transmembrane segments (helical) span residues Leu37–Phe57, Leu101–Leu121, Phe142–Phe162, Val169–Thr189, Ile219–Leu239, Trp241–Ile261, and Ala271–Leu293.

Belongs to the UbiA prenyltransferase family. The cofactor is Mg(2+).

Its subcellular location is the cell inner membrane. The catalysed reaction is all-trans-octaprenyl diphosphate + 4-hydroxybenzoate = 4-hydroxy-3-(all-trans-octaprenyl)benzoate + diphosphate. Its pathway is cofactor biosynthesis; ubiquinone biosynthesis. Catalyzes the prenylation of para-hydroxybenzoate (PHB) with an all-trans polyprenyl group. Mediates the second step in the final reaction sequence of ubiquinone-8 (UQ-8) biosynthesis, which is the condensation of the polyisoprenoid side chain with PHB, generating the first membrane-bound Q intermediate 3-octaprenyl-4-hydroxybenzoate. This Cupriavidus metallidurans (strain ATCC 43123 / DSM 2839 / NBRC 102507 / CH34) (Ralstonia metallidurans) protein is 4-hydroxybenzoate octaprenyltransferase.